The following is a 239-amino-acid chain: ATP synthase subunit a (239 aa).

Transmembrane regions (helical) follow at residues 27-47 (GQVFLSSWIVIGALLAVVVLG), 86-106 (LPFIGTLFLFIFVSNWGGALI), 125-145 (INTTVAMALLVSLAFFYAGLS), 190-210 (LAVAVLASLVPLLVPLPVMLL), and 211-231 (GLFTSAIQALIFATLAAFYIG).

It belongs to the ATPase A chain family. F-type ATPases have 2 components, CF(1) - the catalytic core - and CF(0) - the membrane proton channel. CF(1) has five subunits: alpha(3), beta(3), gamma(1), delta(1), epsilon(1). CF(0) has four main subunits: a, b, b' and c.

It localises to the cellular thylakoid membrane. Functionally, key component of the proton channel; it plays a direct role in the translocation of protons across the membrane. This Synechococcus sp. (strain RCC307) protein is ATP synthase subunit a.